The chain runs to 419 residues: Innexin-2 (419 aa).

A run of 4 helical transmembrane segments spans residues 33-53 (AWFT…KQYF), 108-128 (PLVL…WNLF), 184-204 (INYF…MVLL), and 270-290 (LYIC…AGMI).

It belongs to the pannexin family.

The protein localises to the cell membrane. It localises to the cell junction. Its subcellular location is the gap junction. Structural component of the gap junctions. The polypeptide is Innexin-2 (inx-2) (Caenorhabditis elegans).